The primary structure comprises 231 residues: Acyl-protein thioesterase 2 (231 aa).

Cysteine 2 is lipidated: S-palmitoyl cysteine. Serine 82 is subject to Phosphoserine. Catalysis depends on charge relay system residues serine 122, aspartate 176, and histidine 210.

Belongs to the AB hydrolase superfamily. AB hydrolase 2 family. In terms of tissue distribution, ubiquitous; detected at low levels.

The protein localises to the cytoplasm. The catalysed reaction is S-hexadecanoyl-L-cysteinyl-[protein] + H2O = L-cysteinyl-[protein] + hexadecanoate + H(+). It catalyses the reaction prostaglandin E2 1-glyceryl ester + H2O = prostaglandin E2 + glycerol + H(+). It carries out the reaction 1-hexadecanoyl-sn-glycero-3-phosphocholine + H2O = sn-glycerol 3-phosphocholine + hexadecanoate + H(+). The enzyme catalyses 1-octadecanoyl-sn-glycero-3-phosphocholine + H2O = octadecanoate + sn-glycerol 3-phosphocholine + H(+). The catalysed reaction is 1-hexadecanoyl-sn-glycero-3-phosphate + H2O = sn-glycerol 3-phosphate + hexadecanoate + H(+). It catalyses the reaction 1-hexadecanoyl-sn-glycero-3-phospho-L-serine + H2O = sn-glycero-3-phospho-L-serine + hexadecanoate + H(+). In terms of biological role, acts as an acyl-protein thioesterase hydrolyzing fatty acids from S-acylated cysteine residues in proteins such as trimeric G alpha proteins, GSDMD, GAP43, ZDHHC6 or HRAS. Deacylates GAP43. Mediates depalmitoylation of ZDHHC6. Has lysophospholipase activity. Hydrolyzes prostaglandin glycerol esters (PG-Gs). Hydrolyzes PG-Gs in the following order prostaglandin D2-glycerol ester (PGD2-G) &gt; prostaglandin E2 glycerol ester (PGE2-G) &gt; prostaglandin F2-alpha-glycerol ester (PGF2-alpha-G). Hydrolyzes 1-arachidonoylglycerol but not 2-arachidonoylglycerol or arachidonoylethanolamide. The sequence is that of Acyl-protein thioesterase 2 (Lypla2) from Mus musculus (Mouse).